The sequence spans 514 residues: Butyrophilin subfamily 2 member A2 (514 aa).

An N-terminal signal peptide occupies residues 1–29 (MEPTTSLRSCPIASLLFFLVLSLFVLVSA). The region spanning 30-142 (QFTVIGPAEP…SYDQATMKLM (113 aa)) is the Ig-like V-type domain. At 30–244 (QFTVIGPAEP…ILIPESFVPS (215 aa)) the chain is on the extracellular side. N-linked (GlcNAc...) asparagine glycosylation is found at Asn-47 and Asn-115. Disulfide bonds link Cys-52–Cys-126 and Cys-166–Cys-220. One can recognise an Ig-like C2-type domain in the interval 150–232 (PLIKMKTLED…NNTLLSQEVE (83 aa)). The chain crosses the membrane as a helical span at residues 245–265 (LPLWMVAVAVTLPVVMLILLT). The Cytoplasmic segment spans residues 266–514 (SGSICLVKKH…PISQSLVRKP (249 aa)). A coiled-coil region spans residues 281–304 (ILSAEKEAEYEEKEAARQLQEELR). One can recognise a B30.2/SPRY domain in the interval 295–488 (AARQLQEELR…LFICPAFTGA (194 aa)).

Belongs to the immunoglobulin superfamily. BTN/MOG family. N-glycosylated. As to expression, widely expressed (at protein level). In the thymus, restricted to the corticomedullary junction, but not confined solely to epithelial cells (at protein level). Significant expression on naive B-cells, splenic natural killer cells, dendritic cells and peritoneal macrophages (at protein level). Negligible expression on naive T-cells up-regulated on activated T-cells (at protein level).

Its subcellular location is the membrane. Its function is as follows. Inhibits the proliferation of CD4 and CD8 T-cells activated by anti-CD3 antibodies, T-cell metabolism and IL2 and IFNG secretion. This Mus musculus (Mouse) protein is Butyrophilin subfamily 2 member A2 (Btn2a2).